Consider the following 1069-residue polypeptide: ISWI chromatin-remodeling complex ATPase CHR17 (1069 aa).

The segment covering 1–10 (MARASKREVS) has biased composition (basic and acidic residues). Disordered regions lie at residues 1–93 (MARA…KEMQ) and 136–168 (FAKSDPSPSQKKGKGRGRHSSKLTEEEEDEECL). Composition is skewed to acidic residues over residues 15–37 (YSSEEEEQVNDQANVEEDDDELE) and 45–78 (SDEEDVAPDEAPVSDDEVVPVEDDAEEDEEDEEK). A compositionally biased stretch (basic and acidic residues) spans 79–93 (AEISKREKARLKEMQ). The span at 146–156 (KKGKGRGRHSS) shows a compositional bias: basic residues. The Helicase ATP-binding domain maps to 206-371 (IRLYENGING…WALLNFLLPE (166 aa)). An ATP-binding site is contributed by 219–226 (DEMGLGKT). Positions 322–325 (DEAH) match the DEAH box motif. In terms of domain architecture, Helicase C-terminal spans 499-650 (LLDKLLPKLK…ALVIQQGRLA (152 aa)). 2 SANT domains span residues 845–897 (EGFS…VRYK) and 946–1007 (QNKG…DTLI). The disordered stretch occupies residues 1016–1069 (EFDERERQARKEKKLSKSATPSKRPSGRQANESPSSLLKKRKQLSMDDYGKRRK). Residues 1032-1051 (KSATPSKRPSGRQANESPSS) are compositionally biased toward polar residues. A compositionally biased stretch (basic and acidic residues) spans 1059–1069 (LSMDDYGKRRK).

It belongs to the SNF2/RAD54 helicase family. ISWI subfamily. In terms of assembly, interacts with RLT1. Binds to FGT1. As to expression, highly expressed in growing tissues such as inflorescence and flower meristems, young leaves and floral organs. Expressed in roots, rosette and cauline leaves, stems, flowers, inflorescences and siliques.

It is found in the nucleus. In terms of biological role, possesses intrinsic ATP-dependent nucleosome-remodeling activity. Constitutes the catalytic subunit of several complexes capable of forming ordered nucleosome arrays on chromatin. Involved in the formation of nucleosome distribution patterns. Required for the maintenance of the plant vegetative phase. In association with RLT1 or RLT2 may prevent the early activation of the vegetative-to-reproductive transition by regulating key genes that contribute to flower timing, such as FT, SEP1, SEP3, AGL8/FUL, SOC1 and FLC. Necessary to acquire heat stress (HS) memory. This chain is ISWI chromatin-remodeling complex ATPase CHR17, found in Arabidopsis thaliana (Mouse-ear cress).